The chain runs to 277 residues: Antigen 1 (277 aa).

The first 16 residues, 1–16, serve as a signal peptide directing secretion; that stretch reads MQLLALTLALCASIAA. 4 N-linked (GlcNAc...) asparagine glycosylation sites follow: Asn41, Asn71, Asn127, and Asn200. The disordered stretch occupies residues 230 to 277; the sequence is CVGGEEENDGQGEEQTEEPAQDDQQDEAAEEEIPENCHTHEGGELHCT. A compositionally biased stretch (acidic residues) spans 233-263; the sequence is GEEENDGQGEEQTEEPAQDDQQDEAAEEEIP. The span at 264-277 shows a compositional bias: basic and acidic residues; sequence ENCHTHEGGELHCT.

This sequence belongs to the ZPS1 family.

This is Antigen 1 (aspnd1) from Emericella nidulans (strain FGSC A4 / ATCC 38163 / CBS 112.46 / NRRL 194 / M139) (Aspergillus nidulans).